The chain runs to 457 residues: UDP-N-acetyl-alpha-D-muramoyl-L-alanyl-L-glutamate epimerase (457 aa).

It belongs to the MurL family.

The catalysed reaction is UDP-N-acetyl-alpha-D-muramoyl-L-alanyl-L-glutamate + ATP + H2O = UDP-N-acetyl-alpha-D-muramoyl-L-alanyl-D-glutamate + AMP + diphosphate + H(+). It participates in cell wall biogenesis; peptidoglycan biosynthesis. Functionally, cell wall formation. Catalyzes epimerization of the terminal L-glutamate in UDP-N-acetyl-alpha-D-muramoyl-L-alanyl-L-glutamate. The protein is UDP-N-acetyl-alpha-D-muramoyl-L-alanyl-L-glutamate epimerase of Salinispora tropica (strain ATCC BAA-916 / DSM 44818 / JCM 13857 / NBRC 105044 / CNB-440).